We begin with the raw amino-acid sequence, 248 residues long: MGGSTSKNSFKNTTNIISNSIFNQMQNCISMLDGKNYIGVFGDGNILNHVFQDLNLSLDTSCVQKHVNEENFITNLSNQITQNLKDQEVALTQWMDAGHHDQKTDIEENIKVNLTTTLIQNCVSSLSGMNVLVVKGNGNIVENATQKQSQQIISNCLQGSKQAIDTTTGITNTVNQYSHYTSKNFFDFIADAISAVFKNIMVAAVVIVLIIVGFIAVFYFLHSRHRHEEEEEAEPLISNKVLKNAAVS.

The N-myristoyl glycine; by host moiety is linked to residue Gly-2. Topologically, residues 2–199 (GGSTSKNSFK…ADAISAVFKN (198 aa)) are cytoplasmic. A helical membrane pass occupies residues 200–220 (IMVAAVVIVLIIVGFIAVFYF). Residues 221–248 (LHSRHRHEEEEEAEPLISNKVLKNAAVS) lie on the Extracellular side of the membrane.

Belongs to the asfivirus E248R family. In terms of assembly, interacts with A151R.

The protein resides in the host membrane. The protein localises to the virion membrane. Its function is as follows. Essential for viral fusion with host endosomal membrane and core release. The sequence is that of Inner membrane protein pE248R from African swine fever virus (strain Badajoz 1971 Vero-adapted) (Ba71V).